A 455-amino-acid polypeptide reads, in one-letter code: Retinoic acid receptor beta (455 aa).

Positions 1–87 (MTTSGHACPV…PLPPPRVYKP (87 aa)) are modulating. The disordered stretch occupies residues 47 to 78 (HPPPSGCSTPSPATIETQSTSSEELVPSPPSP). Polar residues predominate over residues 53–66 (CSTPSPATIETQST). A Phosphoserine modification is found at serine 77. NR C4-type zinc fingers lie at residues 88–108 (CFVC…CEGC) and 124–148 (CHRD…LQKC). The segment at residues 88-153 (CFVCQDKSSG…RLQKCFEVGM (66 aa)) is a DNA-binding region (nuclear receptor). The segment at 154–182 (SKESVRNDRNKKKKETSKQECTESYEMTA) is hinge. The NR LBD domain maps to 183-417 (ELDDLTEKIR…PLIQEMLENS (235 aa)). Positions 415–455 (ENSEGHEPLTPSSSGNTAEHSPSISPSSVENSGVSQSPLVQ) are disordered. Positions 424–434 (TPSSSGNTAEH) are enriched in polar residues. Low complexity predominate over residues 435–455 (SPSISPSSVENSGVSQSPLVQ).

The protein belongs to the nuclear hormone receptor family. NR1 subfamily. Homodimer. Heterodimer; with a RXR molecule. Binds DNA preferentially as a RAR/RXR heterodimer. Heterodimerizes (via NR LBD) with RXRA. Interacts weakly with NCOR2. Expressed in aortic endothelial cells (at protein level).

The protein resides in the nucleus. It is found in the cytoplasm. Its function is as follows. Receptor for retinoic acid. Retinoic acid receptors bind as heterodimers to their target response elements in response to their ligands, all-trans or 9-cis retinoic acid, and regulate gene expression in various biological processes. The RXR/RAR heterodimers bind to the retinoic acid response elements (RARE) composed of tandem 5'-AGGTCA-3' sites known as DR1-DR5. In the absence or presence of hormone ligand, acts mainly as an activator of gene expression due to weak binding to corepressors. The RXRA/RARB heterodimer can act as a repressor on the DR1 element and as an activator on the DR5 element. In concert with RARG, required for skeletal growth, matrix homeostasis and growth plate function. The polypeptide is Retinoic acid receptor beta (RARB) (Homo sapiens (Human)).